The chain runs to 882 residues: DNA mismatch repair protein MutS (882 aa).

Position 656–663 (656–663) interacts with ATP; it reads GPNASGKS.

This sequence belongs to the DNA mismatch repair MutS family.

Functionally, this protein is involved in the repair of mismatches in DNA. It is possible that it carries out the mismatch recognition step. This protein has a weak ATPase activity. This Synechococcus sp. (strain ATCC 27144 / PCC 6301 / SAUG 1402/1) (Anacystis nidulans) protein is DNA mismatch repair protein MutS.